Here is a 237-residue protein sequence, read N- to C-terminus: Ribonuclease PH (237 aa).

Phosphate is bound by residues R86 and 124-126; that span reads GTR.

The protein belongs to the RNase PH family. In terms of assembly, homohexameric ring arranged as a trimer of dimers.

It carries out the reaction tRNA(n+1) + phosphate = tRNA(n) + a ribonucleoside 5'-diphosphate. Its function is as follows. Phosphorolytic 3'-5' exoribonuclease that plays an important role in tRNA 3'-end maturation. Removes nucleotide residues following the 3'-CCA terminus of tRNAs; can also add nucleotides to the ends of RNA molecules by using nucleoside diphosphates as substrates, but this may not be physiologically important. Probably plays a role in initiation of 16S rRNA degradation (leading to ribosome degradation) during starvation. The protein is Ribonuclease PH of Roseobacter denitrificans (strain ATCC 33942 / OCh 114) (Erythrobacter sp. (strain OCh 114)).